The chain runs to 816 residues: Mechanosensitive cation channel TMEM63B (816 aa).

Residues 1–46 are Extracellular-facing; it reads MLPYVIATLGSAGSTCKASTCSNSTKDYCYSARIRSTVLQGLPFGG. A helical transmembrane segment spans residues 47 to 71; it reads VPTVLALDFMCFLALLFVFSILRKV. 2 S-palmitoyl cysteine lipidation sites follow: cysteine 57 and cysteine 119. Over 72 to 138 the chain is Cytoplasmic; it reads AWDYGRLALV…KDDEIRDKCG (67 aa). Residues 139 to 171 form a helical membrane-spanning segment; the sequence is GDAVHYLSFQRHIIGLLVAVGVLSVGIVLPVNF. The Extracellular segment spans residues 172–195; it reads SGDLLENNAYSFGRTTIANLNSGN. Residues 196-220 traverse the membrane as a helical segment; it reads NLLWLHTSFAFLYLLLTVYSMRRHT. The Cytoplasmic portion of the chain corresponds to 221–420; the sequence is SKMRYKEDDL…IYWEHLSIRG (200 aa). Positions 224–419 are intracellular linker IL2; confers mechanosensitivity; it reads RYKEDDLVKR…NIYWEHLSIR (196 aa). Residues cysteine 375 and cysteine 391 are each lipidated (S-palmitoyl cysteine). The chain crosses the membrane as a helical span at residues 421-450; it reads FIWWIRCLVINVVLFILLFFLTTPAIIITT. At 451–465 the chain is on the extracellular side; sequence MDKFNVTKPVEYLNN. The helical transmembrane segment at 466–495 threads the bilayer; it reads PIITQFFPTLLLWCFSALLPTIVYYSAFFE. The Cytoplasmic portion of the chain corresponds to 496–499; it reads AHWT. A helical membrane pass occupies residues 500–536; it reads RSGENRTTMHKCYTFLIFMVLLLPSLGLSSLDVFFRW. Topologically, residues 537–559 are extracellular; it reads LFDKKFLAEAAVRFECVFLPDNG. A helical transmembrane segment spans residues 560–592; sequence AFFVNYVIASAFIGNAMDLLRIPGLLMYMIRLC. The segment at 560–592 is gating helix; sequence AFFVNYVIASAFIGNAMDLLRIPGLLMYMIRLC. Residues 593–612 lie on the Cytoplasmic side of the membrane; that stretch reads LARSAAERRNVKRHQAYEFQ. A helical transmembrane segment spans residues 613 to 631; the sequence is FGAAYAWMMCVFTVVMTYS. Residues 632 to 634 are Extracellular-facing; the sequence is ITC. A helical transmembrane segment spans residues 635–659; sequence PIIVPFGLMYMLLKHLVDRYNLYYA. Over 660–666 the chain is Cytoplasmic; sequence YLPAKLD. A helical transmembrane segment spans residues 667–695; it reads KKIHSGAVNQVVAAPILCLFWLLFFSTMR. The Extracellular portion of the chain corresponds to 696–700; that stretch reads TGFLA. Residues 701–721 traverse the membrane as a helical segment; sequence PTSMFTFVVLVITIVICLCHV. Residues cysteine 719 and cysteine 722 are each lipidated (S-palmitoyl cysteine). Topologically, residues 722–816 are cytoplasmic; sequence CFGHFKYLSA…DSLIENEIRQ (95 aa).

Belongs to the CSC1 (TC 1.A.17) family. Monomer. In terms of processing, palmitoylation is required for localization to the plasma membrane and stability.

Its subcellular location is the cell membrane. The protein localises to the lysosome membrane. It localises to the early endosome membrane. The catalysed reaction is Ca(2+)(in) = Ca(2+)(out). It catalyses the reaction Mg(2+)(in) = Mg(2+)(out). It carries out the reaction K(+)(in) = K(+)(out). The enzyme catalyses Na(+)(in) = Na(+)(out). The catalysed reaction is Cs(+)(in) = Cs(+)(out). In terms of biological role, mechanosensitive cation channel with low conductance and high activation threshold. Osmosensitive cation channel preferentially activated by hypotonic stress. Also acts as a phospholipid scramblase in response to changes in membrane structure: upon changes in membrane curvature and thickness, alters its conformation and translocates phospholipids, thereby controlling plasma membrane lipid distribution. The protein is Mechanosensitive cation channel TMEM63B of Gallus gallus (Chicken).